The primary structure comprises 213 residues: Na(+)-translocating NADH-quinone reductase subunit D (213 aa).

Transmembrane regions (helical) follow at residues Pro-21 to Ala-41, Leu-42 to Leu-62, Ile-77 to Ile-97, Leu-101 to Leu-121, Phe-131 to Ile-151, Glu-153 to Ser-173, and Phe-183 to Val-203.

Belongs to the NqrDE/RnfAE family. As to quaternary structure, composed of six subunits; NqrA, NqrB, NqrC, NqrD, NqrE and NqrF.

It is found in the cell inner membrane. It catalyses the reaction a ubiquinone + n Na(+)(in) + NADH + H(+) = a ubiquinol + n Na(+)(out) + NAD(+). In terms of biological role, NQR complex catalyzes the reduction of ubiquinone-1 to ubiquinol by two successive reactions, coupled with the transport of Na(+) ions from the cytoplasm to the periplasm. NqrA to NqrE are probably involved in the second step, the conversion of ubisemiquinone to ubiquinol. The sequence is that of Na(+)-translocating NADH-quinone reductase subunit D from Chlamydia abortus (strain DSM 27085 / S26/3) (Chlamydophila abortus).